We begin with the raw amino-acid sequence, 124 residues long: Large ribosomal subunit protein uL18 (124 aa).

It belongs to the universal ribosomal protein uL18 family. In terms of assembly, part of the 50S ribosomal subunit; part of the 5S rRNA/L5/L18/L25 subcomplex. Contacts the 5S and 23S rRNAs.

Its function is as follows. This is one of the proteins that bind and probably mediate the attachment of the 5S RNA into the large ribosomal subunit, where it forms part of the central protuberance. The sequence is that of Large ribosomal subunit protein uL18 from Frankia casuarinae (strain DSM 45818 / CECT 9043 / HFP020203 / CcI3).